The sequence spans 124 residues: Early nodulin-5 (124 aa).

The signal sequence occupies residues 1–12; the sequence is IIFSMWLLFSFS.

Its function is as follows. Involved in the infection process during the plant-rhizobium interaction. This chain is Early nodulin-5 (ENOD5), found in Vicia sativa (Spring vetch).